The sequence spans 385 residues: Uroporphyrinogen decarboxylase (385 aa).

Substrate is bound by residues 53–57, Asp-102, Tyr-179, Ser-234, and His-363; that span reads RQAGR.

The protein belongs to the uroporphyrinogen decarboxylase family. In terms of assembly, homodimer.

It is found in the cytoplasm. The enzyme catalyses uroporphyrinogen III + 4 H(+) = coproporphyrinogen III + 4 CO2. Its pathway is porphyrin-containing compound metabolism; protoporphyrin-IX biosynthesis; coproporphyrinogen-III from 5-aminolevulinate: step 4/4. Catalyzes the decarboxylation of four acetate groups of uroporphyrinogen-III to yield coproporphyrinogen-III. This is Uroporphyrinogen decarboxylase from Tropheryma whipplei (strain TW08/27) (Whipple's bacillus).